We begin with the raw amino-acid sequence, 106 residues long: UPF0060 membrane protein Bphy_5052 (106 aa).

A run of 4 helical transmembrane segments spans residues 4-24, 30-50, 58-78, and 82-102; these read LLLYVVTAVAEIVGCYLPWRW, SVWLLLPGALSLALFAWLLTF, VYAAYGGVYVAVAILWLWCVD, and PSAWDLAGVALTLAGMSIIAF.

This sequence belongs to the UPF0060 family.

It localises to the cell inner membrane. The protein is UPF0060 membrane protein Bphy_5052 of Paraburkholderia phymatum (strain DSM 17167 / CIP 108236 / LMG 21445 / STM815) (Burkholderia phymatum).